Here is a 219-residue protein sequence, read N- to C-terminus: Phosphatidylserine decarboxylase proenzyme (219 aa).

Ser188 acts as the Schiff-base intermediate with substrate; via pyruvic acid in catalysis. At Ser188 the chain carries Pyruvic acid (Ser); by autocatalysis.

The protein belongs to the phosphatidylserine decarboxylase family. PSD-A subfamily. Heterodimer of a large membrane-associated beta subunit and a small pyruvoyl-containing alpha subunit. Pyruvate serves as cofactor. Post-translationally, is synthesized initially as an inactive proenzyme. Formation of the active enzyme involves a self-maturation process in which the active site pyruvoyl group is generated from an internal serine residue via an autocatalytic post-translational modification. Two non-identical subunits are generated from the proenzyme in this reaction, and the pyruvate is formed at the N-terminus of the alpha chain, which is derived from the carboxyl end of the proenzyme. The post-translation cleavage follows an unusual pathway, termed non-hydrolytic serinolysis, in which the side chain hydroxyl group of the serine supplies its oxygen atom to form the C-terminus of the beta chain, while the remainder of the serine residue undergoes an oxidative deamination to produce ammonia and the pyruvoyl prosthetic group on the alpha chain.

Its subcellular location is the cell membrane. The catalysed reaction is a 1,2-diacyl-sn-glycero-3-phospho-L-serine + H(+) = a 1,2-diacyl-sn-glycero-3-phosphoethanolamine + CO2. It functions in the pathway phospholipid metabolism; phosphatidylethanolamine biosynthesis; phosphatidylethanolamine from CDP-diacylglycerol: step 2/2. In terms of biological role, catalyzes the formation of phosphatidylethanolamine (PtdEtn) from phosphatidylserine (PtdSer). This Citrifermentans bemidjiense (strain ATCC BAA-1014 / DSM 16622 / JCM 12645 / Bem) (Geobacter bemidjiensis) protein is Phosphatidylserine decarboxylase proenzyme.